A 474-amino-acid chain; its full sequence is Receptor-transporting protein 3 (474 aa).

Residues 1–453 (MMEEDIGDTE…SCCEAACNCM (453 aa)) lie on the Cytoplasmic side of the membrane. The 3CxxC-type zinc-finger motif lies at 53–164 (TFARFHCPSC…SSNCEACLLG (112 aa)). The interval 175–304 (SKPPAPPLSP…ISCTSKPSTT (130 aa)) is disordered. 2 stretches are compositionally biased toward polar residues: residues 197 to 228 (VTCS…NPTK) and 259 to 304 (VTCS…PSTT). A helical membrane pass occupies residues 454-474 (SQSPLCCLAFLILFLLLWYLL).

This sequence belongs to the TMEM7 family. As to quaternary structure, interacts with TAS2R16. As to expression, expressed predominantly in the liver. Not detected in the olfactory epithelium.

The protein resides in the membrane. Functionally, promotes functional cell surface expression of the bitter taste receptors TAS2R16 and TAS2R43. The polypeptide is Receptor-transporting protein 3 (Rtp3) (Mus musculus (Mouse)).